A 123-amino-acid polypeptide reads, in one-letter code: WAP four-disulfide core domain protein 5 (123 aa).

Positions 1–24 (MRIQSLLLLGVLLAVGSQLPAAFG) are cleaved as a signal peptide. WAP domains lie at 27–73 (KGEK…CVPR) and 74–121 (ISVK…RDPA). 8 disulfide bridges follow: Cys-34/Cys-62, Cys-41/Cys-66, Cys-49/Cys-61, Cys-55/Cys-70, Cys-81/Cys-109, Cys-88/Cys-113, Cys-96/Cys-108, and Cys-102/Cys-117.

The protein resides in the secreted. Functionally, putative acid-stable proteinase inhibitor. The polypeptide is WAP four-disulfide core domain protein 5 (WFDC5) (Callithrix jacchus (White-tufted-ear marmoset)).